A 430-amino-acid polypeptide reads, in one-letter code: Transcobalamin-2 (430 aa).

Positions 1-18 (MELLKALLLLSGVFGALA) are cleaved as a signal peptide. Cystine bridges form between Cys-21/Cys-270, Cys-116/Cys-312, and Cys-165/Cys-208. Cob(II)alamin-binding positions include 152 to 156 (TNYYQ), His-193, 193 to 197 (HVSVD), Asn-245, Ser-248, Gln-294, and 398 to 400 (WQL).

Belongs to the eukaryotic cobalamin transport proteins family. As to quaternary structure, interacts with CD320 (via LDL-receptor class A domains).

It is found in the secreted. In terms of biological role, primary vitamin B12-binding and transport protein. Delivers cobalamin to cells. The protein is Transcobalamin-2 (Tcn2) of Mus musculus (Mouse).